A 428-amino-acid chain; its full sequence is Homocitrate synthase, cytosolic isozyme (428 aa).

In terms of domain architecture, Pyruvate carboxyltransferase spans 23–276; sequence FQLIDSTLRE…KSKYKLHKIR (254 aa). Arginine 31 lines the 2-oxoglutarate pocket. Position 32 (glutamate 32) interacts with Mg(2+). Residues histidine 91, arginine 151, and threonine 185 each contribute to the 2-oxoglutarate site. Mg(2+)-binding residues include histidine 212 and histidine 214. The active-site Proton acceptor is the histidine 309. Residue serine 385 is modified to Phosphoserine. Threonine 396 bears the Phosphothreonine mark. The tract at residues 399-428 is disordered; sequence VLSAKKNKKNDSDVPELATIPAAKRTKPSA. Residues serine 401 and serine 410 each carry the phosphoserine modification.

This sequence belongs to the alpha-IPM synthase/homocitrate synthase family. Homocitrate synthase LYS20/LYS21 subfamily. Requires Mg(2+) as cofactor. The cofactor is Mn(2+).

It localises to the cytoplasm. The enzyme catalyses acetyl-CoA + 2-oxoglutarate + H2O = (2R)-homocitrate + CoA + H(+). Its pathway is amino-acid biosynthesis; L-lysine biosynthesis via AAA pathway; L-alpha-aminoadipate from 2-oxoglutarate: step 1/5. Catalyzes the aldol-type condensation of 2-oxoglutarate with acetyl-CoA to yield homocitrate. Carries out the first step of the alpha-aminoadipate (AAA) lysine biosynthesis pathway. The protein is Homocitrate synthase, cytosolic isozyme (LYS20) of Saccharomyces cerevisiae (strain ATCC 204508 / S288c) (Baker's yeast).